Here is a 425-residue protein sequence, read N- to C-terminus: Glutamate-1-semialdehyde 2,1-aminomutase (425 aa).

N6-(pyridoxal phosphate)lysine is present on K265.

It belongs to the class-III pyridoxal-phosphate-dependent aminotransferase family. HemL subfamily. As to quaternary structure, homodimer. Pyridoxal 5'-phosphate serves as cofactor.

It localises to the cytoplasm. It carries out the reaction (S)-4-amino-5-oxopentanoate = 5-aminolevulinate. Its pathway is porphyrin-containing compound metabolism; protoporphyrin-IX biosynthesis; 5-aminolevulinate from L-glutamyl-tRNA(Glu): step 2/2. The protein is Glutamate-1-semialdehyde 2,1-aminomutase of Thiobacillus denitrificans (strain ATCC 25259 / T1).